We begin with the raw amino-acid sequence, 59 residues long: Putative antitoxin AF_1090 (59 aa).

This sequence belongs to the UPF0165 family.

In terms of biological role, possibly the antitoxin component of a type II toxin-antitoxin (TA) system. This Archaeoglobus fulgidus (strain ATCC 49558 / DSM 4304 / JCM 9628 / NBRC 100126 / VC-16) protein is Putative antitoxin AF_1090.